The sequence spans 131 residues: MYNKVIMIGRLTAKPEMVKTPTDKSVTRATVAVNRRFKGSNGEREADFINVVMWGRLAETLASYGTKGSLISVDGELRTRKYEKDGQTHYITEVLASSFQLLESRSQRAMRENNISGDLSDLVLEEEELPF.

Positions 1–103 (MYNKVIMIGR…VLASSFQLLE (103 aa)) constitute an SSB domain. Positions 126-131 (EEELPF) match the Important for interaction with partner proteins motif.

In terms of assembly, homotetramer.

Plays an important role in DNA replication, recombination and repair. Binds to ssDNA and to an array of partner proteins to recruit them to their sites of action during DNA metabolism. The protein is Single-stranded DNA-binding protein 2 (ssb2) of Streptococcus agalactiae serotype III (strain NEM316).